The following is a 195-amino-acid chain: Protein Fer3 (195 aa).

Disordered regions lie at residues 1 to 24 (MQHP…LWGQ) and 56 to 82 (PLVP…RRRV). Residues 63-75 (STNGRANGSSSSS) are compositionally biased toward low complexity. The bHLH domain occupies 86-138 (AQRRAANIRERRRMFNLNEAFDKLRRKVPTFAYEKRLSRIETLRLAITYIGFM). Residues 145 to 175 (TPSNSHKSRSDVYGSMNGHHQAPPPAIHPHH) form a disordered region.

The protein resides in the nucleus. Transcription factor that binds to the E-box and functions as inhibitor of transcription. DNA binding requires dimerization with an E protein. Inhibits transcription activation by ASCL1/MASH1 by sequestering E proteins. The chain is Protein Fer3 (fer3) from Drosophila melanogaster (Fruit fly).